Reading from the N-terminus, the 376-residue chain is Cytochrome-c peroxidase IdrP1 (376 aa).

The first 24 residues, 1–24 (MGHIRSIRLALAVAAVCTAASAAA), serve as a signal peptide directing secretion. Cytochrome c domains follow at residues 49-157 (DKVA…AAFK) and 203-354 (AEAQ…EALS). 6 residues coordinate heme c: C71, C74, H75, C218, C221, and H222.

In terms of assembly, the iodate reductase (Idr) complex is composed of a molybdopterin-dependent iodate reductase (IdrA and IdrB subunits) and two associated peroxidases (IdrP1 and IdrP2). The cofactor is heme c.

The protein localises to the periplasm. It catalyses the reaction 2 Fe(II)-[cytochrome c] + H2O2 + 2 H(+) = 2 Fe(III)-[cytochrome c] + 2 H2O. In terms of biological role, involved in iodate respiration. May play a critical role in detoxification of inadvertent H(2)O(2) generated by the iodate reductase IdrA/IdrB. This is Cytochrome-c peroxidase IdrP1 from Denitromonas iodatirespirans.